Here is a 479-residue protein sequence, read N- to C-terminus: Beta-monoglucosyldiacylglycerol synthase (479 aa).

Transmembrane regions (helical) follow at residues 48-68 (AAVMLMAIWTVVITLHYWVWG), 363-383 (FLLMQYLLPTAAVPDLLMALW), 389-409 (LLTPLSYLAIGFSCWGMYYGL), and 428-448 (LARTIGGTIYMFHWLIIMPAV).

The protein belongs to the glycosyltransferase 2 family. Mg(2+) serves as cofactor.

It is found in the membrane. It catalyses the reaction a 1,2-diacyl-sn-glycerol + UDP-alpha-D-glucose = a 1,2-diacyl-3-O-(beta-D-glucopyranosyl)-sn-glycerol + UDP + H(+). Functionally, glucosyltransferase involved in the biosynthesis of the non-bilayer-forming membrane lipid beta-monoglucosyldiacylglycerol which contributes to regulate the properties and stability of the membrane. Catalyzes the transfer of a glucosyl residue from UDP-Glc to diacylglycerol (DAG) acceptor to form the corresponding beta-glucosyl-DAG (1,2-diacyl-3-O-(beta-D-glucopyranosyl)-sn-glycerol). It can only use UDP-Glc as sugar donor. Two types of DAG (dipalmitoyl-DAG (DPDAG) and 1-oleoyl-2-palmitoyl-DAG (OPDAG)) can be used as sugar acceptors, but OPDAG is preferred. This is Beta-monoglucosyldiacylglycerol synthase from Synechocystis sp. (strain ATCC 27184 / PCC 6803 / Kazusa).